A 299-amino-acid chain; its full sequence is Probable lipid kinase YegS (299 aa).

A DAGKc domain is found at 2–133; that stretch reads ANFPDSLLIL…IDMARVNDKT (132 aa). Residues Thr-40, 66-72, and Thr-95 each bind ATP; that span reads GDGTINE. Residues Leu-215, Asp-218, and Leu-220 each coordinate Mg(2+). The active-site Proton acceptor is Glu-271.

It belongs to the diacylglycerol/lipid kinase family. YegS lipid kinase subfamily. The cofactor is Mg(2+). Ca(2+) is required as a cofactor.

The protein resides in the cytoplasm. In terms of biological role, probably phosphorylates lipids; the in vivo substrate is unknown. The chain is Probable lipid kinase YegS from Salmonella arizonae (strain ATCC BAA-731 / CDC346-86 / RSK2980).